A 197-amino-acid chain; its full sequence is MSTILIAIIALAVLAAVFGAILGFASIRFKVEADPIVDQIDTILPQTQCGQCGYPGCRPYAEAIANGDKINKCPPGGQATIEKLADLMGVEVEDSAHDLDNKVKTVAFIHEDMCIGCTKCIQACPVDAIVGGTKALHTVIKDECTGCDLCVAPCPTDCIEMIPVATTTENWKWQMNIIPVTDITNQATDATASEPKA.

The segment at 1–26 (MSTILIAIIALAVLAAVFGAILGFAS) is hydrophobic. One can recognise a 4Fe-4S domain in the interval 32–90 (EADPIVDQIDTILPQTQCGQCGYPGCRPYAEAIANGDKINKCPPGGQATIEKLADLMGV). 12 residues coordinate [4Fe-4S] cluster: Cys49, Cys52, Cys57, Cys73, Cys114, Cys117, Cys120, Cys124, Cys144, Cys147, Cys150, and Cys154. 2 4Fe-4S ferredoxin-type domains span residues 105–134 (TVAF…GGTK) and 135–164 (ALHT…MIPV).

It belongs to the 4Fe4S bacterial-type ferredoxin family. RnfB subfamily. The complex is composed of six subunits: RnfA, RnfB, RnfC, RnfD, RnfE and RnfG. Requires [4Fe-4S] cluster as cofactor.

It localises to the cell inner membrane. Functionally, part of a membrane-bound complex that couples electron transfer with translocation of ions across the membrane. In Vibrio atlanticus (strain LGP32) (Vibrio splendidus (strain Mel32)), this protein is Ion-translocating oxidoreductase complex subunit B.